Reading from the N-terminus, the 29-residue chain is Cytochrome b6-f complex subunit 8 (29 aa).

Residues 3–23 traverse the membrane as a helical segment; sequence IVSLAWASLMVVFTFSLSLVV.

This sequence belongs to the PetN family. In terms of assembly, the 4 large subunits of the cytochrome b6-f complex are cytochrome b6, subunit IV (17 kDa polypeptide, PetD), cytochrome f and the Rieske protein, while the 4 small subunits are PetG, PetL, PetM and PetN. The complex functions as a dimer.

It is found in the plastid. The protein localises to the chloroplast thylakoid membrane. Its function is as follows. Component of the cytochrome b6-f complex, which mediates electron transfer between photosystem II (PSII) and photosystem I (PSI), cyclic electron flow around PSI, and state transitions. The sequence is that of Cytochrome b6-f complex subunit 8 from Coffea arabica (Arabian coffee).